The primary structure comprises 325 residues: Glutarate 2-hydroxylase (325 aa).

Positions 160, 162, and 292 each coordinate Fe cation.

The protein belongs to the glutarate hydroxylase family. In terms of assembly, homotetramer. Requires Fe(2+) as cofactor.

It catalyses the reaction glutarate + 2-oxoglutarate + O2 = (S)-2-hydroxyglutarate + succinate + CO2. The protein operates within amino-acid degradation. Acts as an alpha-ketoglutarate-dependent dioxygenase catalyzing hydroxylation of glutarate (GA) to L-2-hydroxyglutarate (L2HG). Functions in a L-lysine degradation pathway that proceeds via cadaverine, glutarate and L-2-hydroxyglutarate. This chain is Glutarate 2-hydroxylase, found in Pseudomonas putida (strain ATCC 700007 / DSM 6899 / JCM 31910 / BCRC 17059 / LMG 24140 / F1).